The chain runs to 226 residues: Phosphoglycolate phosphatase (226 aa).

The active-site Nucleophile is the D9. Positions 9 and 11 each coordinate Mg(2+). Residue K150 coordinates substrate. Mg(2+) contacts are provided by D173 and D177.

Belongs to the archaeal SPP-like hydrolase family. Requires Mg(2+) as cofactor.

It catalyses the reaction 2-phosphoglycolate + H2O = glycolate + phosphate. Catalyzes the dephosphorylation of 2-phosphoglycolate. The chain is Phosphoglycolate phosphatase from Methanosarcina acetivorans (strain ATCC 35395 / DSM 2834 / JCM 12185 / C2A).